The chain runs to 390 residues: MKFIDESLIRIEAGDGGNGCVSFRREKFIPKGGPDGGDGGDGGDVYLQADENLNTLIDYRFNKRFAAERGENGRSSDCTGRRGKDIILPVPVGTRAIDNDTKETLGDLTQHGQKMLVAKGGYHGLGNTRFKSSVNRAPRQKTMGTPGEKRDLLLELMLLADVGMLGLPNAGKSTFIRAVSAAKPKVADYPFTTLVPSLGVVKVDDSHSFVVADIPGLIEGAADGAGLGIRFLKHLERCRVLIHLVDIAPIDGSNPADNVAIIESELFQYSEKLSEKPRWLVFNKIDTMSDEEAEERVREITEQLGWEEDYYLISAATRKNVPPLCRDIMDFIIANPREAETQQVAPEEVKFKWEDYHQEQLAGYQFDDDEDWDDDWTEEDDEGIEFIYKP.

The region spanning 1–159 (MKFIDESLIR…RDLLLELMLL (159 aa)) is the Obg domain. The OBG-type G domain occupies 160–333 (ADVGMLGLPN…LCRDIMDFII (174 aa)). GTP is bound by residues 166-173 (GLPNAGKS), 191-195 (FTTLV), 213-216 (DIPG), 283-286 (NKID), and 314-316 (SAA). Mg(2+)-binding residues include Ser-173 and Thr-193.

It belongs to the TRAFAC class OBG-HflX-like GTPase superfamily. OBG GTPase family. As to quaternary structure, monomer. Requires Mg(2+) as cofactor.

It localises to the cytoplasm. Its function is as follows. An essential GTPase which binds GTP, GDP and possibly (p)ppGpp with moderate affinity, with high nucleotide exchange rates and a fairly low GTP hydrolysis rate. Plays a role in control of the cell cycle, stress response, ribosome biogenesis and in those bacteria that undergo differentiation, in morphogenesis control. This Haemophilus influenzae (strain 86-028NP) protein is GTPase Obg.